The primary structure comprises 284 residues: Homeobox protein SIX1 (284 aa).

Residues 124–183 (GEETSYCFKEKSRGVLREWYAHNPYPSPREKRELAEATGLTTTQVSNWFKNRRQRDRAAE) constitute a DNA-binding region (homeobox). Positions 168–269 (VSNWFKNRRQ…LQTHQHQLQD (102 aa)) are disordered. Basic and acidic residues predominate over residues 179 to 190 (DRAAEAKERENT). Residues 242 to 269 (RSSNYSLPGLTASQPSHGLQTHQHQLQD) show a composition bias toward polar residues.

The protein belongs to the SIX/Sine oculis homeobox family. Interacts with DACH1. Interacts with EYA1. Interacts with EYA2. Interacts with CDH1. Interacts with TBX18. Interacts with CEBPA. Interacts with CEBPB. Interacts with EBF2. In terms of processing, phosphorylated during interphase; becomes hyperphosphorylated during mitosis. Hyperphosphorylation impairs binding to promoter elements. Ubiquitinated by the anaphase promoting complex (APC), leading to its proteasomal degradation. Specifically expressed in skeletal muscle.

It localises to the nucleus. The protein resides in the cytoplasm. Functionally, transcription factor that is involved in the regulation of cell proliferation, apoptosis and embryonic development. Plays an important role in the development of several organs, including kidney, muscle and inner ear. Depending on context, functions as a transcriptional repressor or activator. Lacks an activation domain, and requires interaction with EYA family members for transcription activation. Mediates nuclear translocation of EYA1 and EYA2. Binds the 5'-TCA[AG][AG]TTNC-3' motif present in the MEF3 element in the MYOG promoter and CIDEA enhancer. Regulates the expression of numerous genes, including MYC, CCND1 and EZR. Acts as an activator of the IGFBP5 promoter, probably coactivated by EYA2. Repression of precursor cell proliferation in myoblasts is switched to activation through recruitment of EYA3 to the SIX1-DACH1 complex. During myogenesis, seems to act together with EYA2 and DACH2. Regulates the expression of CCNA1. Promotes brown adipocyte differentiation. The chain is Homeobox protein SIX1 (SIX1) from Homo sapiens (Human).